We begin with the raw amino-acid sequence, 106 residues long: Large ribosomal subunit protein uL24 (106 aa).

The segment covering 84 to 97 has biased composition (basic and acidic residues); sequence EKIGRELGAKEKAR. The segment at 84–106 is disordered; it reads EKIGRELGAKEKARLQKRKTAAK.

This sequence belongs to the universal ribosomal protein uL24 family. Part of the 50S ribosomal subunit.

In terms of biological role, one of two assembly initiator proteins, it binds directly to the 5'-end of the 23S rRNA, where it nucleates assembly of the 50S subunit. Functionally, one of the proteins that surrounds the polypeptide exit tunnel on the outside of the subunit. The chain is Large ribosomal subunit protein uL24 from Anaeromyxobacter dehalogenans (strain 2CP-1 / ATCC BAA-258).